The sequence spans 64 residues: Small hydrophobic protein (64 aa).

The segment at I6–W15 is interaction with host BCAP31. A helical transmembrane segment spans residues L20–I40. The tract at residues T38–K43 is interaction with small-molecule inhibitor. N52 is a glycosylation site (N-linked (GlcNAc...) asparagine; by host).

Belongs to the orthopneumovirus small hydrophobic protein family. Homopentamer forming a funnel-like pore. Interacts with glycoprotein G; this interaction occurs on the surface of virion particles and infected cells. Interacts with host BCAP31 (via C-terminus); this interaction is direct. In terms of processing, four species of SH have been detected in infected cell cytoplasm: a 7.5 kDa non-glycosylated form (SH0), a 13-15 kDa form that contains one or two N-linked carbohydrate side chains of the high-mannose type (SHg), a 21-30 kDa polylactosaminoglycan-modified form of the protein (SHp), and the isoform generated by alternative translational initiation. Of these different forms, SH0 is by far the most abundant protein detected during virus infection. Tyrosine phosphorylated.

It is found in the virion membrane. The protein resides in the host cell membrane. It localises to the host Golgi apparatus membrane. The protein localises to the host endoplasmic reticulum membrane. Its activity is regulated as follows. Channel activity is inhibited by copper. Also inhibited by small-molecule pyronin B. Viroporin that forms a homopentameric ion channel displaying low ion selectivity. May play a role in virus morphogenesis and pathogenicity at various stages of the viral life cycle. Accumulates at the membrane of the Golgi apparatus in infected cells and may facilitate virus release by modifying the secretory pathway. May enhance host membrane permeability and disrupt cellular ion homeostasis, which can be sensed as damage-associated molecular patterns/danger signals, triggering NLRP3 inflammasome activation and inflammatory immune response. Also inhibits host TNFA-mediated signaling pathway and may delay apoptosis, allowing time for the virus to replicate. This Homo sapiens (Human) protein is Small hydrophobic protein (SH).